The chain runs to 497 residues: MFTVKPWSSAEVVHEALAIGLFEGKDSWSGLAGEYDSRLGGQLSNLRKEGDISAKRGRIATIHTMLPTGVKRLYFVGLGKKEELTFERLREVFGKLFRTWKQAKRTEAAIALDTFTTETVDSNEAAHALAEAYYLATYEFPGYKQKKSEPDYALESLTVYTAADAAEIEASLFVGSVYGKATNSARTLVNTPGNLLTASDLADYAVELAKRYDFDYEILEKEEMERLGMGALLAVNQGSKQPPKLIVLKYQGKEQWENVIGLVGKGVTFDTGGYCLKPRDSMIDMKTDMGGAAAVLGAMEAIGELRPEQNVLAVIPATDNMISAEAFKPDDVITSLSGKTIEVRNTDAEGRLILADAITYAKQHGARYLIDVATLTGGVIVALGTDKTGAMTNNEALFEQLLEASMETGEFIWRLPITEKDRERVRSSKIADLNNSPGREGHAIMGGAFIGEFAEDTPWVHLDIAGTATTKKDGDLGPAGATGVMVRTLTAFVERFE.

Residues lysine 265 and aspartate 270 each contribute to the Mn(2+) site. The active site involves lysine 277. Mn(2+) contacts are provided by aspartate 288, aspartate 347, and glutamate 349. Arginine 351 is an active-site residue.

It belongs to the peptidase M17 family. It depends on Mn(2+) as a cofactor.

The protein localises to the cytoplasm. The catalysed reaction is Release of an N-terminal amino acid, Xaa-|-Yaa-, in which Xaa is preferably Leu, but may be other amino acids including Pro although not Arg or Lys, and Yaa may be Pro. Amino acid amides and methyl esters are also readily hydrolyzed, but rates on arylamides are exceedingly low.. The enzyme catalyses Release of an N-terminal amino acid, preferentially leucine, but not glutamic or aspartic acids.. Its function is as follows. Presumably involved in the processing and regular turnover of intracellular proteins. Catalyzes the removal of unsubstituted N-terminal amino acids from various peptides. In Geobacillus thermodenitrificans (strain NG80-2), this protein is Probable cytosol aminopeptidase.